We begin with the raw amino-acid sequence, 184 residues long: Large ribosomal subunit protein uL5 (184 aa).

The protein belongs to the universal ribosomal protein uL5 family. As to quaternary structure, part of the 50S ribosomal subunit; part of the 5S rRNA/L5/L18/L25 subcomplex. Contacts the 5S rRNA and the P site tRNA. Forms a bridge to the 30S subunit in the 70S ribosome.

In terms of biological role, this is one of the proteins that bind and probably mediate the attachment of the 5S RNA into the large ribosomal subunit, where it forms part of the central protuberance. In the 70S ribosome it contacts protein S13 of the 30S subunit (bridge B1b), connecting the 2 subunits; this bridge is implicated in subunit movement. Contacts the P site tRNA; the 5S rRNA and some of its associated proteins might help stabilize positioning of ribosome-bound tRNAs. In Corynebacterium kroppenstedtii (strain DSM 44385 / JCM 11950 / CIP 105744 / CCUG 35717), this protein is Large ribosomal subunit protein uL5.